We begin with the raw amino-acid sequence, 181 residues long: ATP-dependent protease subunit HslV (181 aa).

Threonine 7 is an active-site residue. Na(+) contacts are provided by glycine 164, cysteine 167, and threonine 170.

Belongs to the peptidase T1B family. HslV subfamily. In terms of assembly, a double ring-shaped homohexamer of HslV is capped on each side by a ring-shaped HslU homohexamer. The assembly of the HslU/HslV complex is dependent on binding of ATP.

The protein resides in the cytoplasm. The enzyme catalyses ATP-dependent cleavage of peptide bonds with broad specificity.. Allosterically activated by HslU binding. In terms of biological role, protease subunit of a proteasome-like degradation complex believed to be a general protein degrading machinery. The protein is ATP-dependent protease subunit HslV of Shouchella clausii (strain KSM-K16) (Alkalihalobacillus clausii).